We begin with the raw amino-acid sequence, 229 residues long: Transcriptional regulatory protein CreB (229 aa).

Positions 5-119 constitute a Response regulatory domain; that stretch reads TVWLVEDEQG…EVCARVRTLL (115 aa). Asp-54 bears the 4-aspartylphosphate mark. Positions 129-228 form a DNA-binding region, ompR/PhoB-type; sequence SPVIRIGHFE…HRGMGYSLRG (100 aa).

Phosphorylated by CreC.

The protein localises to the cytoplasm. Member of the two-component regulatory system CreC/CreB involved in catabolic regulation. The chain is Transcriptional regulatory protein CreB (creB) from Escherichia coli (strain K12).